Consider the following 355-residue polypeptide: Small ribosomal subunit biogenesis GTPase RsgA 1 (355 aa).

The region spanning 103–262 (GRVADRQAIA…LIDTPGVREF (160 aa)) is the CP-type G domain. GTP-binding positions include 152-155 (NKAD) and 204-212 (GSSGVGKSS). Residues Cys-285, Cys-290, His-292, and Cys-298 each coordinate Zn(2+).

The protein belongs to the TRAFAC class YlqF/YawG GTPase family. RsgA subfamily. In terms of assembly, monomer. Associates with 30S ribosomal subunit, binds 16S rRNA. Requires Zn(2+) as cofactor.

Its subcellular location is the cytoplasm. Functionally, one of several proteins that assist in the late maturation steps of the functional core of the 30S ribosomal subunit. Helps release RbfA from mature subunits. May play a role in the assembly of ribosomal proteins into the subunit. Circularly permuted GTPase that catalyzes slow GTP hydrolysis, GTPase activity is stimulated by the 30S ribosomal subunit. This chain is Small ribosomal subunit biogenesis GTPase RsgA 1, found in Bacteroides thetaiotaomicron (strain ATCC 29148 / DSM 2079 / JCM 5827 / CCUG 10774 / NCTC 10582 / VPI-5482 / E50).